Here is an 833-residue protein sequence, read N- to C-terminus: Putative GPI inositol-deacylase C (833 aa).

S130 is an active-site residue. N-linked (GlcNAc...) asparagine glycosylation is found at N191 and N456. The next 5 membrane-spanning stretches (helical) occupy residues 521–541 (ILFI…QFHA), 560–580 (YLLT…LSQV), 617–637 (VLAP…TELV), 672–692 (TVFV…QLAF), and 723–743 (TICV…AVWI). N-linked (GlcNAc...) asparagine glycosylation occurs at N772. The helical transmembrane segment at 787–807 (LLLAYTSLHCLFYGMMQAFMI) threads the bilayer.

This sequence belongs to the GPI inositol-deacylase family.

Its subcellular location is the endoplasmic reticulum membrane. Its function is as follows. Involved in inositol deacylation of GPI-anchored proteins which plays important roles in the quality control and ER-associated degradation of GPI-anchored proteins. The polypeptide is Putative GPI inositol-deacylase C (BST1C) (Yarrowia lipolytica (strain CLIB 122 / E 150) (Yeast)).